Reading from the N-terminus, the 422-residue chain is Gamma-glutamyl phosphate reductase (422 aa).

The protein belongs to the gamma-glutamyl phosphate reductase family.

Its subcellular location is the cytoplasm. The catalysed reaction is L-glutamate 5-semialdehyde + phosphate + NADP(+) = L-glutamyl 5-phosphate + NADPH + H(+). It participates in amino-acid biosynthesis; L-proline biosynthesis; L-glutamate 5-semialdehyde from L-glutamate: step 2/2. In terms of biological role, catalyzes the NADPH-dependent reduction of L-glutamate 5-phosphate into L-glutamate 5-semialdehyde and phosphate. The product spontaneously undergoes cyclization to form 1-pyrroline-5-carboxylate. The polypeptide is Gamma-glutamyl phosphate reductase (Saccharophagus degradans (strain 2-40 / ATCC 43961 / DSM 17024)).